We begin with the raw amino-acid sequence, 534 residues long: ATP synthase subunit alpha (534 aa).

ATP is bound at residue 170–177 (GDRQTGKT). A disordered region spans residues 505–534 (HEDARVKSETAQAAGKDKDEKAAATAGAGK).

It belongs to the ATPase alpha/beta chains family. F-type ATPases have 2 components, CF(1) - the catalytic core - and CF(0) - the membrane proton channel. CF(1) has five subunits: alpha(3), beta(3), gamma(1), delta(1), epsilon(1). CF(0) has three main subunits: a(1), b(2) and c(9-12). The alpha and beta chains form an alternating ring which encloses part of the gamma chain. CF(1) is attached to CF(0) by a central stalk formed by the gamma and epsilon chains, while a peripheral stalk is formed by the delta and b chains.

The protein resides in the cell inner membrane. It carries out the reaction ATP + H2O + 4 H(+)(in) = ADP + phosphate + 5 H(+)(out). Produces ATP from ADP in the presence of a proton gradient across the membrane. The alpha chain is a regulatory subunit. The sequence is that of ATP synthase subunit alpha from Acidobacterium capsulatum (strain ATCC 51196 / DSM 11244 / BCRC 80197 / JCM 7670 / NBRC 15755 / NCIMB 13165 / 161).